Reading from the N-terminus, the 582-residue chain is Trans-activating transcriptional regulatory protein (582 aa).

Residues 101–131 (QPVVEQPSPSSAYHAESFEHSAGVNQPSATG) are disordered.

This sequence belongs to the nucleopolyhedrovirus IE-1 protein family. As to quaternary structure, homodimer. Interacts with helicase and LEF-3. Post-translationally, phosphorylated.

The protein resides in the host nucleus. Regulatory transcriptional protein, which trans-activates gene expression from early baculovirus promoters. Can also trans-activate its own promoter, suggesting an autoregulation during infection of host cells. Also promotes viral DNA genome replication via the N-terminal region. The polypeptide is Trans-activating transcriptional regulatory protein (IE1) (Autographa californica nuclear polyhedrosis virus (AcMNPV)).